The primary structure comprises 187 residues: Protein dj-1beta (187 aa).

Cysteine 45 carries the cysteine sulfinic acid (-SO2H) modification. Cysteine 104 (nucleophile) is an active-site residue. Cysteine 104 carries the post-translational modification Cysteine sulfinic acid (-SO2H); alternate.

In terms of processing, oxidation of Cys-45 and Cys-104 in response to oxidative stress. Levels of oxidation increase with age. In terms of tissue distribution, expressed in the head and testis (at protein level). Ubiquitously expressed at constant levels.

The protein localises to the mitochondrion. It is found in the cytoplasm. The protein resides in the nucleus. Its function is as follows. Plays an important role in cell protection against oxidative stress and cell death by acting as a oxidative stress sensor. Does not play a role in methylglyoxal detoxification. Plays a role in mitochondrial function together with Pink1. In motor neurons regulates structural synaptic plasticity of locomotor behavior as part of the PTEN-phosphatidylinositol 3-kinase pathway in response to oxygen species (ROS) levels. The chain is Protein dj-1beta from Drosophila melanogaster (Fruit fly).